We begin with the raw amino-acid sequence, 224 residues long: Transmembrane emp24 domain-containing protein 7 (224 aa).

Residues 1–34 form the signal peptide; that stretch reads MPRPGSAQRWAAVAGRWGCRLLALLLLVPGPGGA. At 35–187 the chain is on the lumenal side; that stretch reads SEITFELPDN…RAEDLNTRVA (153 aa). A GOLD domain is found at 46-128; sequence KQCFYEDIAQ…HKTVYFDFQV (83 aa). Residue asparagine 103 is glycosylated (N-linked (GlcNAc...) asparagine). A helical membrane pass occupies residues 188–208; it reads YWSVGEALILLVVSIGQVFLL. Over 209-224 the chain is Cytoplasmic; that stretch reads KSFFSDKRTTTTRVGS. A COPII vesicle coat-binding motif is present at residues 211–212; sequence FF. The COPI vesicle coat-binding signature appears at 211 to 224; the sequence is FFSDKRTTTTRVGS.

Belongs to the EMP24/GP25L family. Predominantly monomeric and to lesser extent homodimeric in endoplasmic reticulum, endoplasmic reticulum-Golgi intermediate compartment and cis-Golgi network. Oligomerizes with other members of the EMP24/GP25L family such as TMED2, TMED9 and TMED10. Interacts (via C-terminus) with COPG1; the interaction involves dimeric TMED7. In terms of processing, N-linked glycosylated in complex form containing terminal sialic acid.

The protein resides in the endoplasmic reticulum membrane. It localises to the golgi apparatus. Its subcellular location is the cis-Golgi network membrane. It is found in the endoplasmic reticulum-Golgi intermediate compartment membrane. The protein localises to the cytoplasmic vesicle. The protein resides in the COPI-coated vesicle membrane. It localises to the COPII-coated vesicle membrane. Its function is as follows. Potential role in vesicular protein trafficking, mainly in the early secretory pathway. Appears to play a role in the biosynthesis of secreted cargo including processing and post-translational modifications. This is Transmembrane emp24 domain-containing protein 7 (TMED7) from Homo sapiens (Human).